The following is a 32-amino-acid chain: SAPQSIWYGPDRPKNRELEVIHSRFGEAVWFK.

Chlorophyll a contacts are provided by E19 and H22. R24 is a binding site for chlorophyll b.

This sequence belongs to the light-harvesting chlorophyll a/b-binding (LHC) protein family. As to quaternary structure, the LHC complex consists of chlorophyll a-b binding proteins. Binds at least 14 chlorophylls (8 Chl-a and 6 Chl-b) and carotenoids such as lutein and neoxanthin. is required as a cofactor. In terms of processing, photoregulated by reversible phosphorylation of its threonine residues.

Its subcellular location is the plastid. It localises to the chloroplast thylakoid membrane. The light-harvesting complex (LHC) functions as a light receptor, it captures and delivers excitation energy to photosystems with which it is closely associated. This chain is Chlorophyll a-b binding protein 2, chloroplastic, found in Populus euphratica (Euphrates poplar).